A 370-amino-acid polypeptide reads, in one-letter code: Putative FBD-associated F-box protein At1g50980 (370 aa).

The F-box domain occupies 31–77 (IRTISEFPDKVLLKILSLLPSKDVVATGVLSKRWRSLWKDVKTFRTS). The FBD domain maps to 292–343 (LMGNQPDLIPKSLSSHLEILEWRQYNDTAQEREAAKYILANASGLRKATFYT).

This Arabidopsis thaliana (Mouse-ear cress) protein is Putative FBD-associated F-box protein At1g50980.